We begin with the raw amino-acid sequence, 169 residues long: Cell division inhibitor SulA (169 aa).

The segment at 106 to 112 (ALRTGNY) is ftsZ binding. Positions 162 to 169 (KIHSNLYH) are lon protease binding.

The protein belongs to the SulA family. In terms of assembly, interacts with FtsZ. Is rapidly cleaved and degraded by the Lon protease once DNA damage is repaired.

In terms of biological role, component of the SOS system and an inhibitor of cell division. Accumulation of SulA causes rapid cessation of cell division and the appearance of long, non-septate filaments. In the presence of GTP, binds a polymerization-competent form of FtsZ in a 1:1 ratio, thus inhibiting FtsZ polymerization and therefore preventing it from participating in the assembly of the Z ring. This mechanism prevents the premature segregation of damaged DNA to daughter cells during cell division. This is Cell division inhibitor SulA from Salmonella arizonae (strain ATCC BAA-731 / CDC346-86 / RSK2980).